Reading from the N-terminus, the 1143-residue chain is uncharacterized protein (1143 aa).

The first 20 residues, 1 to 20 (MKLLLLALILVLSNINLISG), serve as a signal peptide directing secretion. Residues 21 to 1121 (NGLVWPHPRL…PAAGGEDSSA (1101 aa)) lie on the Extracellular side of the membrane. Residues 177-203 (NSGGSWSSGGSGNSGGGWSSGGSGNSG) are compositionally biased toward gly residues. The disordered stretch occupies residues 177 to 1120 (NSGGSWSSGG…EPAAGGEDSS (944 aa)). A compositionally biased stretch (low complexity) spans 222–236 (SSGGWTSGSHSSGSW). Over residues 237-283 (SSGGGSGSSSGGQSSGSWSSGGGSSSGGHSSGSWSSGGGSSAGGGSS) the composition is skewed to gly residues. Positions 284–296 (SGSHSSGSWSSGG) are enriched in low complexity. The segment covering 297 to 330 (SSSGGQSSGSWSSGGGSSSGGQSSGSWSSGGGSS) has biased composition (gly residues). Positions 331 to 368 (SGSHSSGSWSSGGSSSGSHSSGSWSSGGSSSSSGNSGW) are enriched in low complexity. The segment covering 374 to 392 (GNTGGNTGGNTGGNTGGQS) has biased composition (gly residues). The segment covering 393 to 403 (SGNSGWMTASG) has biased composition (low complexity). Gly residues-rich tracts occupy residues 404–418 (GNTGGNTGGNTGGQS) and 430–444 (GNTGGNTGGNTGGQS). Low complexity-rich tracts occupy residues 445–498 (SGSS…TSSG) and 506–541 (GSSSSGGNSGWLTSSGGNSGGSSSSGSNSGASSSGD). 6 stretches are compositionally biased toward gly residues: residues 555-573 (GNTGGNSGAATGGNSGGNS), 580-596 (GNSGGASSSGGNTGGNS), 604-622 (GNTGGNSGAATGGNSGGNS), 629-783 (GNSG…GGNS), 790-843 (GNSG…GGAS), and 851-905 (GNSG…GGNS). Residues 906–1059 (GAATGANSGA…GGNGASGAAN (154 aa)) are compositionally biased toward low complexity. Positions 1062 to 1078 (SIVTPNDQNVSPLSNSD) are enriched in polar residues. A compositionally biased stretch (low complexity) spans 1094–1114 (PTSRAPTVTPTPTSSAEEPAA). The helical transmembrane segment at 1122–1142 (ISKYSIQSFGIFVLSMIIYLV) threads the bilayer. Residue Ile1143 is a topological domain, cytoplasmic.

The protein resides in the membrane. This is an uncharacterized protein from Dictyostelium discoideum (Social amoeba).